The following is a 24-amino-acid chain: Hyaluronidase (24 aa).

As to expression, expressed by the venom gland.

It is found in the secreted. The enzyme catalyses Random hydrolysis of (1-&gt;4)-linkages between N-acetyl-beta-D-glucosamine and D-glucuronate residues in hyaluronate.. Its function is as follows. Possesses high activity against hyaluronan in vitro. The chain is Hyaluronidase from Tityus stigmurus (Brazilian scorpion).